Reading from the N-terminus, the 245-residue chain is 1-(5-phosphoribosyl)-5-[(5-phosphoribosylamino)methylideneamino] imidazole-4-carboxamide isomerase (245 aa).

The active-site Proton acceptor is D7. The Proton donor role is filled by D129.

The protein belongs to the HisA/HisF family.

The protein resides in the cytoplasm. The enzyme catalyses 1-(5-phospho-beta-D-ribosyl)-5-[(5-phospho-beta-D-ribosylamino)methylideneamino]imidazole-4-carboxamide = 5-[(5-phospho-1-deoxy-D-ribulos-1-ylimino)methylamino]-1-(5-phospho-beta-D-ribosyl)imidazole-4-carboxamide. Its pathway is amino-acid biosynthesis; L-histidine biosynthesis; L-histidine from 5-phospho-alpha-D-ribose 1-diphosphate: step 4/9. This chain is 1-(5-phosphoribosyl)-5-[(5-phosphoribosylamino)methylideneamino] imidazole-4-carboxamide isomerase, found in Escherichia fergusonii (strain ATCC 35469 / DSM 13698 / CCUG 18766 / IAM 14443 / JCM 21226 / LMG 7866 / NBRC 102419 / NCTC 12128 / CDC 0568-73).